We begin with the raw amino-acid sequence, 96 residues long: Myosuppressin (96 aa).

Positions Met-1–Cys-24 are cleaved as a signal peptide. The propeptide occupies Ala-25 to Met-80. Gln-83 carries the post-translational modification Pyrrolidone carboxylic acid; partial. Phenylalanine amide is present on Phe-92. Arg-96 is a propeptide.

This sequence belongs to the myosuppressin family. As to expression, expressed in corpora cardiaca (CC), corpora allata (CA), antennal lobe (AL) and gnathal ganglion (GNG) (at protein level). In its non-pyroglutamate form, expression in GNG detected in all animals, in AL, CC and in CA in most animals (at protein level). In its pyroglutamate form, expression in CC, CA and GNG detected in all animals, in AL in some animals (at protein level).

It is found in the secreted. Myoinhibiting neuropeptide. In Agrotis ipsilon (Black cutworm moth), this protein is Myosuppressin.